A 431-amino-acid polypeptide reads, in one-letter code: Eukaryotic translation initiation factor 5 (431 aa).

At serine 10 the chain carries Phosphoserine. Position 27–34 (27–34 (GKGNGIKT)) interacts with GTP. The tract at residues 143–216 (KNPPENSDSG…TTEEAQRRRM (74 aa)) is disordered. Basic and acidic residues predominate over residues 153 to 170 (TGKKEKEKKNRKGKDKEN). The span at 178–193 (TPPPPPPPNEISPPPH) shows a compositional bias: pro residues. Residues 196 to 209 (EEEEDDDWGEDTTE) are compositionally biased toward acidic residues. Threonine 227 carries the post-translational modification Phosphothreonine. 4 positions are modified to phosphoserine: serine 229, serine 389, serine 390, and serine 410. The region spanning 233–392 (ERTIEERVNI…KEAEEESSGG (160 aa)) is the W2 domain. Residues lysine 413 and lysine 418 each participate in a glycyl lysine isopeptide (Lys-Gly) (interchain with G-Cter in SUMO2) cross-link. Position 419 is a phosphoserine (serine 419).

The protein belongs to the eIF-2-beta/eIF-5 family. In terms of assembly, component of the 43S pre-initiation complex (43S PIC), which is composed of the 40S ribosomal subunit, EIF1, eIF1A (EIF1AX), eIF3 complex, EIF5 and eIF2-GTP-initiator tRNA complex (eIF2 ternary complex). Interacts with eIF1A (EIF1AX) during scanning. Interacts through its C-terminal domain (CTD) with EIF1 or with eIF2-beta (EIF2S2) (mutually exclusive) through a common binding site. Interacts through its C-terminal domain (CTD) with the CTD of EIF5B. Interacts with FMR1 isoform 6; this interaction occurs in a RNA-dependent manner.

It localises to the cytoplasm. Its function is as follows. Component of the 43S pre-initiation complex (43S PIC), which binds to the mRNA cap-proximal region, scans mRNA 5'-untranslated region, and locates the initiation codon. In this complex, acts as a GTPase-activating protein, by promoting GTP hydrolysis by eIF2G (EIF2S3). During scanning, interacts with both EIF1 (via its C-terminal domain (CTD)) and EIF1A (via its NTD). This interaction with EIF1A contributes to the maintenance of EIF1 within the open 43S PIC. When start codon is recognized, EIF5, via its NTD, induces eIF2G (EIF2S3) to hydrolyze the GTP. Start codon recognition also induces a conformational change of the PIC to a closed state. This change increases the affinity of EIF5-CTD for EIF2-beta (EIF2S2), which allows the release, by an indirect mechanism, of EIF1 from the PIC. Finally, EIF5 stabilizes the PIC in its closed conformation. The sequence is that of Eukaryotic translation initiation factor 5 (EIF5) from Pongo abelii (Sumatran orangutan).